Reading from the N-terminus, the 323-residue chain is D-alanine--D-alanine ligase (323 aa).

Residues 102-300 enclose the ATP-grasp domain; sequence KQIFRAEGIP…FTELVERMLQ (199 aa). 130–185 is a binding site for ATP; it reads VARLGSPLVVKPSNSGSTVGISLARDEVSLAQGLALASSVSSRVFLERYIPGKEIT. Mg(2+) is bound by residues Asp-254, Glu-267, and Asn-269.

It belongs to the D-alanine--D-alanine ligase family. It depends on Mg(2+) as a cofactor. Requires Mn(2+) as cofactor.

The protein localises to the cytoplasm. It catalyses the reaction 2 D-alanine + ATP = D-alanyl-D-alanine + ADP + phosphate + H(+). Its pathway is cell wall biogenesis; peptidoglycan biosynthesis. In terms of biological role, cell wall formation. The protein is D-alanine--D-alanine ligase of Synechococcus sp. (strain JA-3-3Ab) (Cyanobacteria bacterium Yellowstone A-Prime).